Reading from the N-terminus, the 186-residue chain is MAAVDSSVSGVSGRYATALFELAREDKSIDAVKADLDRFDAMLADSPELARLVRSPVFSADTQAKALAAVLDKAGFGGTTAKFLKVLTANRRLFAVTEVIRAFRALVARFKGEVTAEVTVAETLNKKNLDALTTALKSVTGKDITLNVKVDPSIIGGLVVKLGSRMVDSSLRTKLNSIKHAMKEAG.

It belongs to the ATPase delta chain family. As to quaternary structure, F-type ATPases have 2 components, F(1) - the catalytic core - and F(0) - the membrane proton channel. F(1) has five subunits: alpha(3), beta(3), gamma(1), delta(1), epsilon(1). F(0) has three main subunits: a(1), b(2) and c(10-14). The alpha and beta chains form an alternating ring which encloses part of the gamma chain. F(1) is attached to F(0) by a central stalk formed by the gamma and epsilon chains, while a peripheral stalk is formed by the delta and b chains.

It is found in the cell inner membrane. In terms of biological role, f(1)F(0) ATP synthase produces ATP from ADP in the presence of a proton or sodium gradient. F-type ATPases consist of two structural domains, F(1) containing the extramembraneous catalytic core and F(0) containing the membrane proton channel, linked together by a central stalk and a peripheral stalk. During catalysis, ATP synthesis in the catalytic domain of F(1) is coupled via a rotary mechanism of the central stalk subunits to proton translocation. Its function is as follows. This protein is part of the stalk that links CF(0) to CF(1). It either transmits conformational changes from CF(0) to CF(1) or is implicated in proton conduction. This Nitrobacter hamburgensis (strain DSM 10229 / NCIMB 13809 / X14) protein is ATP synthase subunit delta.